Here is a 167-residue protein sequence, read N- to C-terminus: Ribosome maturation factor RimM (167 aa).

The region spanning 94-166 (DDRAWLHELE…YIHVPRFDEF (73 aa)) is the PRC barrel domain.

Belongs to the RimM family. In terms of assembly, binds ribosomal protein uS19.

The protein localises to the cytoplasm. In terms of biological role, an accessory protein needed during the final step in the assembly of 30S ribosomal subunit, possibly for assembly of the head region. Essential for efficient processing of 16S rRNA. May be needed both before and after RbfA during the maturation of 16S rRNA. It has affinity for free ribosomal 30S subunits but not for 70S ribosomes. The polypeptide is Ribosome maturation factor RimM (Chlorobium luteolum (strain DSM 273 / BCRC 81028 / 2530) (Pelodictyon luteolum)).